The primary structure comprises 435 residues: MKKFHIVKLGCPKNDADMEIFKGLLQSKGYKYESNPQLANYIFIDTCGFIEEAKKESIETIFEYVSLKDNNKNLKVIPIGCLTQRYFDDILKDIPEIDGLYGVLSPKTIVEKIENGEYFFKRDIPETLYDCKIRAIPDSHYAYVKIGDGCSRNCAFCSIPTFKGKPKSRSIEEINEEVEFLVSKGVKEIILVSQDNTLYGIDNYQKQALPDLLDKLNNIKGKFWIRVMYLHPDFLSEEIIESIHRNEKVLNYFDVPIQHISDKILQSMGRHKKRNELIKLFEKIRKEPSAIRTTLMVGFPGEKAEDFEELVDFVKEIKFERMGSFIFSKEENTKSFTLPEQIDEQIKKQRQNELMTVQSEISKNIMEKYIGETLEVLLEEKEDNVYVGRSYLDAPEIDGNVYIKNFGDKELTFGNFVKVTITGSYEYDLEGEIVE.

Positions 2–118 constitute an MTTase N-terminal domain; that stretch reads KKFHIVKLGC…IVEKIENGEY (117 aa). [4Fe-4S] cluster-binding residues include Cys11, Cys47, Cys81, Cys150, Cys154, and Cys157. One can recognise a Radical SAM core domain in the interval 136–364; it reads IPDSHYAYVK…MTVQSEISKN (229 aa). Residues 367-435 form the TRAM domain; sequence EKYIGETLEV…EYDLEGEIVE (69 aa).

Belongs to the methylthiotransferase family. RimO subfamily. Requires [4Fe-4S] cluster as cofactor.

The protein localises to the cytoplasm. The enzyme catalyses L-aspartate(89)-[ribosomal protein uS12]-hydrogen + (sulfur carrier)-SH + AH2 + 2 S-adenosyl-L-methionine = 3-methylsulfanyl-L-aspartate(89)-[ribosomal protein uS12]-hydrogen + (sulfur carrier)-H + 5'-deoxyadenosine + L-methionine + A + S-adenosyl-L-homocysteine + 2 H(+). Its function is as follows. Catalyzes the methylthiolation of an aspartic acid residue of ribosomal protein uS12. This Petrotoga mobilis (strain DSM 10674 / SJ95) protein is Ribosomal protein uS12 methylthiotransferase RimO.